The sequence spans 322 residues: RNA-binding motif protein, X-linked 2 (322 aa).

Residue lysine 8 forms a Glycyl lysine isopeptide (Lys-Gly) (interchain with G-Cter in SUMO2) linkage. Positions 36-114 constitute an RRM domain; the sequence is AWIFLGGLPY…RTIRVDHVSN (79 aa). The disordered stretch occupies residues 134–322; it reads KGCGARTPSP…SSNPSDRWRH (189 aa). At threonine 140 the chain carries Phosphothreonine. The residue at position 149 (serine 149) is a Phosphoserine. Positions 155–171 are enriched in basic residues; that stretch reads TKKHKKDKKEKKKKKKE. Serine 186 and serine 188 each carry phosphoserine. The span at 195–223 shows a compositional bias: basic and acidic residues; that stretch reads KEKDDTGPKKHSSKNSERAQKSEPREGQK. Serine 232 is modified (phosphoserine). Basic and acidic residues predominate over residues 240–274; it reads RELKKEKPKHEHKSSSRREAREEKTRIRDRGRSSD. Lysine 243 participates in a covalent cross-link: Glycyl lysine isopeptide (Lys-Gly) (interchain with G-Cter in SUMO2). Residue serine 272 is modified to Phosphoserine. The span at 289 to 308 shows a compositional bias: basic residues; sequence YRSRSRSRDKSHRHKRARRS. Serine 314 carries the phosphoserine modification.

It belongs to the IST3 family. In terms of assembly, part of the activated spliceosome B/catalytic step 1 spliceosome, one of the forms of the spliceosome which has a well-formed active site but still cannot catalyze the branching reaction and is composed of at least 52 proteins, the U2, U5 and U6 snRNAs and the pre-mRNA. Component of the minor spliceosome, which splices U12-type introns.

Its subcellular location is the nucleus. Involved in pre-mRNA splicing as component of the activated spliceosome. As a component of the minor spliceosome, involved in the splicing of U12-type introns in pre-mRNAs. This Homo sapiens (Human) protein is RNA-binding motif protein, X-linked 2 (RBMX2).